Reading from the N-terminus, the 180-residue chain is Major urinary protein 6 (180 aa).

Positions 1 to 18 (MKMLLLLCLGLTLVCVHA) are cleaved as a signal peptide. Cys82 and Cys175 are joined by a disulfide.

It belongs to the calycin superfamily. Lipocalin family. In terms of tissue distribution, abundant in the urine of adult male mice but absent from that of females.

The protein resides in the secreted. Functionally, binds pheromones that are released from drying urine of males. These pheromones affect the sexual behavior of females. This is Major urinary protein 6 (Mup6) from Mus musculus (Mouse).